A 209-amino-acid chain; its full sequence is Nucleoside triphosphate pyrophosphatase (209 aa).

The active-site Proton acceptor is the D79.

This sequence belongs to the Maf family. It depends on a divalent metal cation as a cofactor.

The protein resides in the cytoplasm. The catalysed reaction is a ribonucleoside 5'-triphosphate + H2O = a ribonucleoside 5'-phosphate + diphosphate + H(+). The enzyme catalyses a 2'-deoxyribonucleoside 5'-triphosphate + H2O = a 2'-deoxyribonucleoside 5'-phosphate + diphosphate + H(+). Its function is as follows. Nucleoside triphosphate pyrophosphatase. May have a dual role in cell division arrest and in preventing the incorporation of modified nucleotides into cellular nucleic acids. The chain is Nucleoside triphosphate pyrophosphatase from Mycolicibacterium gilvum (strain PYR-GCK) (Mycobacterium gilvum (strain PYR-GCK)).